The primary structure comprises 492 residues: 5-taurinomethyluridine-[tRNA] synthase subunit GTPB3, mitochondrial (492 aa).

A mitochondrion-targeting transit peptide spans 1–20 (MWRGLSALVTQAAWAPLRLC). Positions 52, 112, and 152 each coordinate 5,10-methylenetetrahydrofolate. One can recognise a TrmE-type G domain in the interval 249–416 (GANVVVTGPP…LLQALKTELA (168 aa)). GTP contacts are provided by residues 256–263 (GPPNAGKS), 282–286 (GTTRD), 303–306 (DTAG), and 374–377 (NKSD). Asn259 lines the K(+) pocket. The Mg(2+) site is built by Ser263 and Thr284. Residue Lys492 participates in 5,10-methylenetetrahydrofolate binding.

Belongs to the TRAFAC class TrmE-Era-EngA-EngB-Septin-like GTPase superfamily. TrmE GTPase family. As to quaternary structure, homodimer; forms a dimer in the presence of potassium. Interacts with MTO1; forms the GTPBP3-MTO1 complex composed of homodimers of GTPBP3 and MTO1. K(+) serves as cofactor. As to expression, ubiquitously expressed. Highly expressed in tissues with high metabolic rates including heart, liver and brain. Weakly expressed in skeletal muscle.

The protein resides in the mitochondrion. The catalysed reaction is GTP + H2O = GDP + phosphate + H(+). GTPase component of the GTPBP3-MTO1 complex that catalyzes the 5-taurinomethyluridine (taum(5)U) modification at the 34th wobble position (U34) of mitochondrial tRNAs (mt-tRNAs), which plays a role in mt-tRNA decoding and mitochondrial translation. Taum(5)U formation on mammalian mt-tRNA requires the presence of both GTPBP3-mediated GTPase activity and MTO1 catalytic activity. The polypeptide is 5-taurinomethyluridine-[tRNA] synthase subunit GTPB3, mitochondrial (Mus musculus (Mouse)).